The sequence spans 248 residues: 4-hydroxy-tetrahydrodipicolinate reductase (248 aa).

NAD(+)-binding positions include 8-13, Asp-34, 76-78, and 103-106; these read GAKGRV, GTT, and APNF. His-133 functions as the Proton donor/acceptor in the catalytic mechanism. Residue His-134 coordinates (S)-2,3,4,5-tetrahydrodipicolinate. The Proton donor role is filled by Lys-137. 143–144 lines the (S)-2,3,4,5-tetrahydrodipicolinate pocket; it reads GT.

The protein belongs to the DapB family.

It is found in the cytoplasm. It carries out the reaction (S)-2,3,4,5-tetrahydrodipicolinate + NAD(+) + H2O = (2S,4S)-4-hydroxy-2,3,4,5-tetrahydrodipicolinate + NADH + H(+). It catalyses the reaction (S)-2,3,4,5-tetrahydrodipicolinate + NADP(+) + H2O = (2S,4S)-4-hydroxy-2,3,4,5-tetrahydrodipicolinate + NADPH + H(+). Its pathway is amino-acid biosynthesis; L-lysine biosynthesis via DAP pathway; (S)-tetrahydrodipicolinate from L-aspartate: step 4/4. Functionally, catalyzes the conversion of 4-hydroxy-tetrahydrodipicolinate (HTPA) to tetrahydrodipicolinate. The protein is 4-hydroxy-tetrahydrodipicolinate reductase of Corynebacterium urealyticum (strain ATCC 43042 / DSM 7109).